Consider the following 104-residue polypeptide: Small ribosomal subunit protein uS10 (104 aa).

The protein belongs to the universal ribosomal protein uS10 family. In terms of assembly, part of the 30S ribosomal subunit.

In terms of biological role, involved in the binding of tRNA to the ribosomes. This Helicobacter pylori (strain P12) protein is Small ribosomal subunit protein uS10.